Reading from the N-terminus, the 67-residue chain is Large ribosomal subunit protein bL35 (67 aa).

It belongs to the bacterial ribosomal protein bL35 family.

This is Large ribosomal subunit protein bL35 from Novosphingobium aromaticivorans (strain ATCC 700278 / DSM 12444 / CCUG 56034 / CIP 105152 / NBRC 16084 / F199).